An 831-amino-acid chain; its full sequence is Cysteine--tRNA ligase, cytoplasmic (831 aa).

Ala-2 is subject to N-acetylalanine. Ser-102 carries the phosphoserine modification. A Zn(2+)-binding site is contributed by Cys-138. Residue Gly-139 coordinates L-cysteine. Residues 140 to 150 (PTVYDASHMGH) carry the 'HIGH' region motif. Residue Thr-179 coordinates L-cysteine. Residues 184 to 187 (KIIR) carry the 'KIIK' region motif. Residues Ser-388 and Ser-390 each carry the phosphoserine modification. Zn(2+) is bound by residues Cys-431, His-456, and Glu-460. His-456 lines the L-cysteine pocket. The 'KMSKS' region motif lies at 489-493 (KMSKS). Residue Lys-492 coordinates ATP. The span at 736–762 (GKKRAEEEKRRKKEEAARKKQEQEAAK) shows a compositional bias: basic and acidic residues. The segment at 736–766 (GKKRAEEEKRRKKEEAARKKQEQEAAKLAKM) is disordered. A Phosphoserine modification is found at Ser-829.

The protein belongs to the class-I aminoacyl-tRNA synthetase family. As to quaternary structure, homodimer. The cofactor is Zn(2+).

It is found in the cytoplasm. The enzyme catalyses tRNA(Cys) + L-cysteine + ATP = L-cysteinyl-tRNA(Cys) + AMP + diphosphate. Functionally, catalyzes the ATP-dependent ligation of cysteine to tRNA(Cys). This Mus musculus (Mouse) protein is Cysteine--tRNA ligase, cytoplasmic (Cars1).